Here is a 570-residue protein sequence, read N- to C-terminus: PTS system lactose-specific EIICB component (570 aa).

Positions 9 to 410 (IEKGKPFFEK…VVDIIIYYPF (402 aa)) constitute a PTS EIIC type-3 domain. The next 9 helical transmembrane spans lie at 31-51 (GFIS…IAYV), 65-85 (AILM…VAGT), 104-124 (INFI…ASDP), 133-153 (AFMG…TVIV), 178-198 (FKDL…DLVI), 223-243 (GWIG…VGIH), 283-303 (MFIV…MFMW), 340-360 (VFFI…KLFV), and 382-402 (IIMG…LIVV). One can recognise a PTS EIIB type-3 domain in the interval 467–570 (QTNVLVLCAG…LDFVQQQFEN (104 aa)). Catalysis depends on C474, which acts as the Phosphocysteine intermediate; for EIIB activity. C474 bears the Phosphocysteine; by EIIA mark.

The protein localises to the cell membrane. The enzyme catalyses lactose(out) + N(pros)-phospho-L-histidyl-[protein] = lactose 6-phosphate(in) + L-histidyl-[protein]. Its function is as follows. The phosphoenolpyruvate-dependent sugar phosphotransferase system (sugar PTS), a major carbohydrate active transport system, catalyzes the phosphorylation of incoming sugar substrates concomitantly with their translocation across the cell membrane. The enzyme II LacEF PTS system is involved in lactose transport. The protein is PTS system lactose-specific EIICB component of Staphylococcus aureus (strain N315).